A 293-amino-acid chain; its full sequence is Histamine N-methyltransferase A (293 aa).

Glutamate 28 is a substrate binding site. S-adenosyl-L-methionine is bound by residues glycine 60, glutamate 89, glutamine 94, serine 120, and isoleucine 142. Residue asparagine 283 participates in substrate binding.

The protein belongs to the class I-like SAM-binding methyltransferase superfamily. HNMT family. Monomer.

It localises to the cytoplasm. The enzyme catalyses histamine + S-adenosyl-L-methionine = N(tau)-methylhistamine + S-adenosyl-L-homocysteine + H(+). Its function is as follows. Inactivates histamine by N-methylation. Plays an important role in degrading histamine and in regulating the airway response to histamine. The chain is Histamine N-methyltransferase A (hnmt-a) from Xenopus laevis (African clawed frog).